The primary structure comprises 140 residues: MKKILQEFKQFAMRGNVVDMAVGIIIGGAFGKIVSSIVADLIMPAVGLLVGGVNFTDLKITLKHAVMEGDKVISPAVSINYGNFIQVTLDFIIIAFAVFLLVKGVNALSKKKEEAPKAPVAPPADIQLLTEIRDLLKNNK.

2 helical membrane-spanning segments follow: residues 11 to 31 (FAMR…GAFG) and 82 to 102 (GNFI…FLLV).

Belongs to the MscL family. As to quaternary structure, homopentamer.

The protein resides in the cell inner membrane. Functionally, channel that opens in response to stretch forces in the membrane lipid bilayer. May participate in the regulation of osmotic pressure changes within the cell. This is Large-conductance mechanosensitive channel from Parabacteroides distasonis (strain ATCC 8503 / DSM 20701 / CIP 104284 / JCM 5825 / NCTC 11152).